The chain runs to 731 residues: Conserved oligomeric Golgi complex subunit 2 (731 aa).

2 disordered regions span residues 469–496 (ESAK…SEAS) and 659–680 (LKQA…GMSD).

This sequence belongs to the COG2 family. Component of the conserved oligomeric Golgi complex which is composed of eight different subunits and is required for normal Golgi morphology and localization.

It is found in the golgi apparatus membrane. Functionally, required for normal Golgi morphology and function. This Mus musculus (Mouse) protein is Conserved oligomeric Golgi complex subunit 2 (Cog2).